We begin with the raw amino-acid sequence, 631 residues long: Alpha-dioxygenase 2 (631 aa).

A signal peptide spans 1–20 (MGFSPSSSWFLHPQLHHVVS). H157 provides a ligand contact to heme b. Y378 functions as the Proton acceptor in the catalytic mechanism. H381 contacts heme b. N-linked (GlcNAc...) asparagine glycosylation occurs at N583.

Belongs to the peroxidase family. It depends on heme b as a cofactor. In terms of tissue distribution, expressed in seedlings (cotyledons, young leaves, and hypocotyls), flowers, siliques and old leaves.

Its function is as follows. Alpha-dioxygenase that catalyzes the primary oxygenation of fatty acids into oxylipins. May be involved in the senescence process. In Arabidopsis thaliana (Mouse-ear cress), this protein is Alpha-dioxygenase 2 (DOX2).